A 29-amino-acid polypeptide reads, in one-letter code: uncharacterized protein (29 aa).

The chain crosses the membrane as a helical span at residues 8–28 (FALIVVLFILLIIVGTAFVGG).

The protein belongs to the SscA family.

It is found in the membrane. This is an uncharacterized protein from Bacillus subtilis (strain 168).